Here is a 664-residue protein sequence, read N- to C-terminus: Gametogenetin-binding protein 2 (664 aa).

2 disordered regions span residues 375-425 (QEKK…NTSE) and 447-476 (KKGLTPHSNVSDCGYSSSLEGSEPGSQEGS). Residues 376-388 (EKKRQKKNRRKNK) are compositionally biased toward basic residues. Residues 452–475 (PHSNVSDCGYSSSLEGSEPGSQEG) show a composition bias toward polar residues.

The protein localises to the cytoplasm. In terms of biological role, may be involved in spermatogenesis. The sequence is that of Gametogenetin-binding protein 2 (ggnbp2) from Xenopus laevis (African clawed frog).